We begin with the raw amino-acid sequence, 350 residues long: Probable poly-beta-1,6-N-acetyl-D-glucosamine export protein (350 aa).

10 consecutive transmembrane segments (helical) span residues leucine 8–isoleucine 28, leucine 40–leucine 60, tyrosine 83–threonine 103, glutamine 119–phenylalanine 139, phenylalanine 146–phenylalanine 166, leucine 182–glycine 202, leucine 216–glycine 236, isoleucine 254–isoleucine 274, methionine 276–phenylalanine 296, and valine 308–leucine 328.

It belongs to the acyltransferase 3 family.

Its subcellular location is the cell membrane. In terms of biological role, presumably involved in the export of the biofilm adhesin polysaccharide poly-beta-1,6-N-acetyl-D-glucosamine (PNAG, also referred to as PIA) across the cell membrane. This is Probable poly-beta-1,6-N-acetyl-D-glucosamine export protein (icaC) from Staphylococcus aureus (strain NCTC 8325 / PS 47).